Reading from the N-terminus, the 364-residue chain is MREETREQPAPLRSGLTTGSCATATSLAAARLLLSGETSDAVSITLPKGKVVQMRLEFCRLAGESAEAGTLKDAGDDPDVTHGALLYSQVRLLDEPSIRFVAGSGVGTVTRPGLVLAVGEPAINPVPRRMISEHLQRLADECGYFGGFEVTVNVQGGEQLALKTMNPRLGILGGLSILGTSGIVRPFSCAAYIASIHQGIDVAHTNGYTHIAACTGNASEDTMRRVYGLPEIALIEMGDFVGAVLKHLRKVPVPRLTLCGGFGKISKLAAGHMDLHSRHSSIDLPQLAGWAADIGADAALQAAIIGANTSQQALALAHAAGIALGDAVCAHALAFARSVVPAQVQVEVFAIDRQGGIVGRAGVQ.

Belongs to the CbiD family.

It carries out the reaction Co-precorrin-5B + S-adenosyl-L-methionine = Co-precorrin-6A + S-adenosyl-L-homocysteine. It participates in cofactor biosynthesis; adenosylcobalamin biosynthesis; cob(II)yrinate a,c-diamide from sirohydrochlorin (anaerobic route): step 6/10. Catalyzes the methylation of C-1 in cobalt-precorrin-5B to form cobalt-precorrin-6A. The sequence is that of Cobalt-precorrin-5B C(1)-methyltransferase from Pseudomonas putida (strain GB-1).